The chain runs to 1196 residues: RAB11-binding protein RELCH homolog (1196 aa).

Disordered regions lie at residues 1 to 73, 159 to 180, and 195 to 225; these read MAAP…SPLN, ATAAPPGFGGNTTASTGGQLNR, and YSDDGNRETDERVAENEVPLQERKNYKSSPE. Gly residues predominate over residues 8–26; sequence SGPGGSSGGITGGAGGSLG. The segment covering 27 to 37 has biased composition (low complexity); the sequence is VVGPSTSTSSV. The span at 43–69 shows a compositional bias: acidic residues; that stretch reads DSEEEEDGGEEEEEEEEDDNEEDDEDV. Over residues 169–180 the composition is skewed to polar residues; sequence NTTASTGGQLNR. Residues 195–219 show a composition bias toward basic and acidic residues; sequence YSDDGNRETDERVAENEVPLQERKN. In terms of domain architecture, LisH spans 234–266; it reads EKRALNFLVNEYLLKNNNKLTSITFSDENDDQD. Residues 333-374 are a coiled coil; it reads IIKELEDKIILCNNEKAALLEQIGNLERQIESLQKENSASGV. Residues 370–393 are disordered; that stretch reads SASGVCSAAPPTSDRLQSQTSEES. 2 HEAT repeats span residues 620–659 and 984–1022; these read VLAMLQQMLMEDKADMVREAVIKSLGIIMGYIDDPDKYSQ and VVPALITLSSDPEISVRIATVPAFGTIMETVTQRELLER.

Its subcellular location is the recycling endosome. The protein localises to the golgi apparatus. It localises to the trans-Golgi network. Its function is as follows. May regulate intracellular cholesterol transport. This chain is RAB11-binding protein RELCH homolog (relch), found in Xenopus tropicalis (Western clawed frog).